A 199-amino-acid polypeptide reads, in one-letter code: Tumor protein p53-inducible nuclear protein 2 (199 aa).

The LIR signature appears at 26–41 (VSEEDEVDGWLIIDLQ). Disordered regions lie at residues 41 to 69 (QDSY…LMDE), 117 to 153 (LESG…LHHA), and 173 to 199 (LQRA…ARES). Positions 47–64 (PPDPRASPAPAGRPPPAP) are enriched in pro residues. Serine 136 is modified (phosphoserine).

In terms of assembly, interacts with VMP1, GABARAP, GABARAPL1, GABARAPL2, MAP1LC3A, MAP1LC3B, MAP1LC3C and THRA. Abundantly expressed in skeletal muscle and heart and expression is highly repressed in muscle from obese diabetic rats.

It is found in the cytoplasm. The protein localises to the cytosol. Its subcellular location is the nucleus. It localises to the PML body. The protein resides in the cytoplasmic vesicle. It is found in the autophagosome. Its function is as follows. Dual regulator of transcription and autophagy. Positively regulates autophagy and is required for autophagosome formation and processing. May act as a scaffold protein that recruits MAP1LC3A, GABARAP and GABARAPL2 and brings them to the autophagosome membrane by interacting with VMP1 where, in cooperation with the BECN1-PI3-kinase class III complex, they trigger autophagosome development. Acts as a transcriptional activator of THRA. In Rattus norvegicus (Rat), this protein is Tumor protein p53-inducible nuclear protein 2 (Tp53inp2).